A 75-amino-acid polypeptide reads, in one-letter code: Translational regulator CsrA (75 aa).

This sequence belongs to the CsrA/RsmA family. In terms of assembly, homodimer; the beta-strands of each monomer intercalate to form a hydrophobic core, while the alpha-helices form wings that extend away from the core. Interacts with FliW.

It localises to the cytoplasm. In terms of biological role, a translational regulator that binds mRNA to regulate translation initiation and/or mRNA stability. Usually binds in the 5'-UTR at or near the Shine-Dalgarno sequence preventing ribosome-binding, thus repressing translation. Its function is probably anatagonized by FliW. Inhibits translation of flaA mRNA in vitro. Involved in post-transcriptional regulation of flagellin biosynthesis. The chain is Translational regulator CsrA from Campylobacter jejuni subsp. jejuni serotype O:6 (strain 81116 / NCTC 11828).